A 346-amino-acid chain; its full sequence is tRNA N6-adenosine threonylcarbamoyltransferase (346 aa).

2 residues coordinate Fe cation: histidine 111 and histidine 115. Residues 134 to 138 (LVSGG), aspartate 167, glycine 180, and asparagine 279 contribute to the substrate site. A Fe cation-binding site is contributed by aspartate 307.

It belongs to the KAE1 / TsaD family. It depends on Fe(2+) as a cofactor.

It is found in the cytoplasm. The catalysed reaction is L-threonylcarbamoyladenylate + adenosine(37) in tRNA = N(6)-L-threonylcarbamoyladenosine(37) in tRNA + AMP + H(+). In terms of biological role, required for the formation of a threonylcarbamoyl group on adenosine at position 37 (t(6)A37) in tRNAs that read codons beginning with adenine. Is involved in the transfer of the threonylcarbamoyl moiety of threonylcarbamoyl-AMP (TC-AMP) to the N6 group of A37, together with TsaE and TsaB. TsaD likely plays a direct catalytic role in this reaction. The sequence is that of tRNA N6-adenosine threonylcarbamoyltransferase from Burkholderia multivorans (strain ATCC 17616 / 249).